Here is a 449-residue protein sequence, read N- to C-terminus: MSLDSNPRIFTVSRLNAEVRLLLENEMGIVWLVGEISNLTVPVSGHWYLTLKDSQAQVKCAMFKGNNRRVTFKPQNGKQVLVKARLSLYEPRGDYQLIIESMQPEGDGRLQQEFDQLKMSLAAEGLFAQTAKKTLPEQPKRVGIITSQTGAALFDILHVLKRRDPNLPVVIYPTMVQGSGAAIQIAQAIGRANSRNECDILIVGRGGGSLEDLWCFNEEIVARTIAASEIPIVSAVGHEIDVTIADFVADVRAPTPSAAAELVSRDLSAQLQTVAHQKRRLNSAMERYLSHQQRSLSAYQHRIEKQHPQMQLNNQSQRLDDLNQRLMNHIQQRLQRQQYRVENLTLRLNNLSPTKRISQDKLHIEELKRRLLDSMDRNLLMQRHQLALAAEKLDTVSPLATLMRGYSITHNQDGKVITSTKQVELGDNITTRFADGDITSTVTKASELS.

The protein belongs to the XseA family. As to quaternary structure, heterooligomer composed of large and small subunits.

Its subcellular location is the cytoplasm. It catalyses the reaction Exonucleolytic cleavage in either 5'- to 3'- or 3'- to 5'-direction to yield nucleoside 5'-phosphates.. Its function is as follows. Bidirectionally degrades single-stranded DNA into large acid-insoluble oligonucleotides, which are then degraded further into small acid-soluble oligonucleotides. This is Exodeoxyribonuclease 7 large subunit from Aliivibrio fischeri (strain MJ11) (Vibrio fischeri).